The primary structure comprises 1157 residues: DNA-directed RNA polymerase subunit beta (1157 aa).

This sequence belongs to the RNA polymerase beta chain family. The RNAP catalytic core consists of 2 alpha, 1 beta, 1 beta' and 1 omega subunit. When a sigma factor is associated with the core the holoenzyme is formed, which can initiate transcription.

The catalysed reaction is RNA(n) + a ribonucleoside 5'-triphosphate = RNA(n+1) + diphosphate. Its function is as follows. DNA-dependent RNA polymerase catalyzes the transcription of DNA into RNA using the four ribonucleoside triphosphates as substrates. The protein is DNA-directed RNA polymerase subunit beta of Tropheryma whipplei (strain TW08/27) (Whipple's bacillus).